The primary structure comprises 233 residues: Large ribosomal subunit protein bL19c (233 aa).

The N-terminal 77 residues, 1–77 (MASKVLPQAL…FPARNSFVVR (77 aa)), are a transit peptide targeting the chloroplast.

In terms of assembly, component of the chloroplast large ribosomal subunit (LSU). Mature 70S chloroplast ribosomes of higher plants consist of a small (30S) and a large (50S) subunit. The 30S small subunit contains 1 molecule of ribosomal RNA (16S rRNA) and 24 different proteins. The 50S large subunit contains 3 rRNA molecules (23S, 5S and 4.5S rRNA) and 33 different proteins.

The protein localises to the plastid. It localises to the chloroplast. Component of the chloroplast ribosome (chloro-ribosome), a dedicated translation machinery responsible for the synthesis of chloroplast genome-encoded proteins, including proteins of the transcription and translation machinery and components of the photosynthetic apparatus. In Spinacia oleracea (Spinach), this protein is Large ribosomal subunit protein bL19c (RPL19).